A 931-amino-acid chain; its full sequence is Up-regulator of cell proliferation (931 aa).

Serine 3 carries the phosphoserine modification. Residues arginine 689–arginine 929 enclose the VLIG-type G domain.

The protein belongs to the TRAFAC class dynamin-like GTPase superfamily. Very large inducible GTPase (VLIG) family. Strongly expressed in hepatitis B virus-infected liver and in HCC cells. Also highly expressed in well-differentiated gastric cancer tissues and various gastric cancer cell lines.

It is found in the cytoplasm. The protein localises to the nucleus. Functionally, may be involved in cell cycle progression through the regulation of cyclin D1 expression. May participate in the development of hepatocellular carcinoma (HCC) by promoting hepatocellular growth and survival. May play an important role in development of gastric cancer. The protein is Up-regulator of cell proliferation (URGCP) of Homo sapiens (Human).